Reading from the N-terminus, the 508-residue chain is MTTIFRLASSSSPSLRHDATPHNFHIRKTSISNTFSFSSKNSLSFKRILTSGGSRRFIVAASPPTEDAVVATEPLTKQDLIDYLASGCKTKDKWRIGTEHEKFGFELGSLRPMKYEQISELLNGIAERFDWDKVMEGDNIIGLKQGKQSISLEPGGQFELSGAPLETLHQTCAEVNSHLYQVKAVAEEMGIGFLGIGFQPKWERKDIPMMPKGRYEIMKKYMPKVGSLGLDMMFRTCTVQVNLDFSSEADMIRKFRAGLALQPIATALFANSPFTDGKPNGFVSMRSHIWTDTDKDRTGMLPFVFDDSFGFEQYVDFALDVPMYFVYRKKKYIDCTGMTFRDFLAGKLPCIPGELPTLNDWENHLTTIFPEVRLKRYLEMRGADGGPWRRLCALPAFWVGILYDEVSLQRVLDMTADWTLEEREMLRNKVTVTGLKTPFRDGLLKHVAEEVLELAKDGLERRGFKESGFLNAVAEVVRTGVTPAERLLELYHGKWEQSVDHVFDELLY.

Residues 1 to 59 (MTTIFRLASSSSPSLRHDATPHNFHIRKTSISNTFSFSSKNSLSFKRILTSGGSRRFIV) constitute a chloroplast transit peptide. Cystine bridges form between Cys-172-Cys-392 and Cys-335-Cys-350.

This sequence belongs to the carboxylate-amine ligase family. Glutamate--cysteine ligase type 2 subfamily. Homodimer or monomer when oxidized or reduced, respectively. In terms of processing, the Cys-172-Cys-392 disulfide bridge is known to modulate the enzyme activity according to the redox status. The oxidized form constitutes the active enzyme.

It localises to the plastid. The protein resides in the chloroplast. It catalyses the reaction L-cysteine + L-glutamate + ATP = gamma-L-glutamyl-L-cysteine + ADP + phosphate + H(+). Its pathway is sulfur metabolism; glutathione biosynthesis; glutathione from L-cysteine and L-glutamate: step 1/2. This Medicago truncatula (Barrel medic) protein is Glutamate--cysteine ligase, chloroplastic (GSH1).